The following is a 189-amino-acid chain: Glycerol-3-phosphate acyltransferase (189 aa).

Helical transmembrane passes span Met-1–Leu-21, Leu-77–Phe-97, Met-111–Phe-131, and Leu-151–Val-171.

Belongs to the PlsY family. In terms of assembly, probably interacts with PlsX.

Its subcellular location is the cell inner membrane. The catalysed reaction is an acyl phosphate + sn-glycerol 3-phosphate = a 1-acyl-sn-glycero-3-phosphate + phosphate. Its pathway is lipid metabolism; phospholipid metabolism. Its function is as follows. Catalyzes the transfer of an acyl group from acyl-phosphate (acyl-PO(4)) to glycerol-3-phosphate (G3P) to form lysophosphatidic acid (LPA). This enzyme utilizes acyl-phosphate as fatty acyl donor, but not acyl-CoA or acyl-ACP. The protein is Glycerol-3-phosphate acyltransferase of Pseudomonas putida (strain W619).